A 170-amino-acid polypeptide reads, in one-letter code: Sec-independent protein translocase protein TatB (170 aa).

The helical transmembrane segment at 1-21 (MIDFGFDKIALIGAVALIVIG) threads the bilayer. The disordered stretch occupies residues 69 to 170 (AARNVEQSVS…VARFRPPRPL (102 aa)). Polar residues predominate over residues 73 to 93 (VEQSVSSEVNRTSSEMNQAWE). The segment covering 128-137 (HPRKNWRLKR) has biased composition (basic residues).

Belongs to the TatB family. The Tat system comprises two distinct complexes: a TatABC complex, containing multiple copies of TatA, TatB and TatC subunits, and a separate TatA complex, containing only TatA subunits. Substrates initially bind to the TatABC complex, which probably triggers association of the separate TatA complex to form the active translocon.

It is found in the cell inner membrane. Part of the twin-arginine translocation (Tat) system that transports large folded proteins containing a characteristic twin-arginine motif in their signal peptide across membranes. Together with TatC, TatB is part of a receptor directly interacting with Tat signal peptides. TatB may form an oligomeric binding site that transiently accommodates folded Tat precursor proteins before their translocation. In Methylibium petroleiphilum (strain ATCC BAA-1232 / LMG 22953 / PM1), this protein is Sec-independent protein translocase protein TatB.